A 374-amino-acid polypeptide reads, in one-letter code: Isocitrate dehydrogenase [NAD] catalytic subunit 5, mitochondrial (374 aa).

A mitochondrion-targeting transit peptide spans 1 to 44 (MTMAANLARRLIGNRSTQILGAVNSSSGAASSVARAFCSSTTPI). Arginine 127, arginine 137, arginine 158, and aspartate 245 together coordinate substrate. The Mg(2+) site is built by aspartate 245, aspartate 269, and aspartate 273.

This sequence belongs to the isocitrate and isopropylmalate dehydrogenases family. In terms of assembly, heterooligomer of catalytic and regulatory subunits. Requires Mg(2+) as cofactor. It depends on Mn(2+) as a cofactor. In terms of tissue distribution, ubiquitous.

Its subcellular location is the mitochondrion. It catalyses the reaction D-threo-isocitrate + NAD(+) = 2-oxoglutarate + CO2 + NADH. Functionally, performs an essential role in the oxidative function of the citric acid cycle. The sequence is that of Isocitrate dehydrogenase [NAD] catalytic subunit 5, mitochondrial (IDH5) from Arabidopsis thaliana (Mouse-ear cress).